The chain runs to 261 residues: uncharacterized protein (261 aa).

Positions Met1–Gly22 are cleaved as a signal peptide. Cys23 carries the N-palmitoyl cysteine lipid modification. Residue Cys23 is the site of S-diacylglycerol cysteine attachment.

The protein belongs to the staphylococcal tandem lipoprotein family.

The protein resides in the cell membrane. This is an uncharacterized protein from Staphylococcus epidermidis (strain ATCC 12228 / FDA PCI 1200).